A 799-amino-acid chain; its full sequence is Oligopeptide transporter 1 (799 aa).

Disordered regions lie at residues 1–26 (MSTIYRESDSLESEPSPTPTTIPIQI) and 43–64 (DVNNLTATTDEEDRDPESQKFD). Topologically, residues 1–108 (MSTIYRESDS…DPTIRLNHWR (108 aa)) are extracellular. Low complexity predominate over residues 13–26 (SEPSPTPTTIPIQI). An N-linked (GlcNAc...) asparagine glycan is attached at Asn46. Residues Thr48, Thr50, and Thr51 each carry the phosphothreonine modification. The helical transmembrane segment at 109 to 129 (TWFLTTVFVVVFAGVNQFFSL) threads the bilayer. Residues 130–135 (RYPSLE) are Cytoplasmic-facing. The helical transmembrane segment at 136-156 (INFLVAQVVCYPIGRILALLP) threads the bilayer. The Extracellular portion of the chain corresponds to 157–177 (DWKCSKVPFFDLNPGPFTKKE). The chain crosses the membrane as a helical span at residues 178 to 198 (HAVVTIAVALTSSTAYAMYIL). Over 199–210 (NAQGSFYNMKLN) the chain is Cytoplasmic. A helical membrane pass occupies residues 211–231 (VGYQFLLVWTSQMIGYGAAGL). The Extracellular segment spans residues 232-276 (TRRWVVNPASSIWPQTLISVSLFDSLHSRKVEKTVANGWTMPRYR). The chain crosses the membrane as a helical span at residues 277-297 (FFLIVLIGSFIWYWVPGFLFT). The Cytoplasmic segment spans residues 298–313 (GLSYFNVILWGSKTRH). A helical transmembrane segment spans residues 314–334 (NFIANTIFGTQSGLGALPITF). Topologically, residues 335 to 359 (DYTQVSQAMSGSVFATPFYVSANTY) are extracellular. Residues 360–380 (ASVLIFFVIVLPCLYFTNTWY) form a helical membrane-spanning segment. At 381-428 (AKYMPVISGSTYDNTQNKYNVTKILNEDYSINLEKYKEYSPVFVPFSY) the chain is on the cytoplasmic side. The chain crosses the membrane as a helical span at residues 429 to 449 (LLSYALNFAAVIAVFVHCILY). The Extracellular segment spans residues 450–482 (HGKDIVAKFKDRKNGGTDIHMRIYSKNYKDCPD). A helical transmembrane segment spans residues 483-503 (WWYLLLQIVMIGLGFVAVCCF). Topologically, residues 504-508 (DTKFP) are cytoplasmic. Residues 509–529 (AWAFVIAILISLVNFIPQGIL) form a helical membrane-spanning segment. Topologically, residues 530 to 540 (EAMTNQHVGLN) are extracellular. A helical membrane pass occupies residues 541-561 (IITELICGYMLPLRPMANLLF). The Cytoplasmic portion of the chain corresponds to 562-590 (KLYGFIVMRQGLNLSRDLKLAMYMKVSPR). Residues 591–611 (LIFAVQIYATIISGMVNVGVQ) form a helical membrane-spanning segment. The Extracellular segment spans residues 612 to 659 (EWMMHNIDGLCTTDQPNGFTCANGRTVFNASIIWSLPKYLFSSGRIYN). Residue Asn640 is glycosylated (N-linked (GlcNAc...) asparagine). A helical transmembrane segment spans residues 660-680 (PLMWFFLIGLLFPLAVYAVQW). Residues 681-736 (KFPKFKFAKHIHTPVFFTGPGNIPPSTPYNYSLFFAMSFCLNLIRKRWRAWFNKYN) lie on the Cytoplasmic side of the membrane. The chain crosses the membrane as a helical span at residues 737–757 (FVMGAGVEAGVAISVVIIFLC). Topologically, residues 758 to 799 (VQYPGGKLSWWGNNVWKRTYDNDYKKFYTLKKGETFGYDKWW) are extracellular.

This sequence belongs to the oligopeptide OPT transporter family.

The protein resides in the cell membrane. In terms of biological role, high affinity transporter for glutathione. Also transports tetra- and pentapeptides like the opioids leucine enkephalin (Tyr-Gly-Gly-Phe-Leu) and methionine enkephalin (Tyr-Gly-Gly_Phe-Met) across the cell membrane. In Saccharomyces cerevisiae (strain ATCC 204508 / S288c) (Baker's yeast), this protein is Oligopeptide transporter 1 (OPT1).